Reading from the N-terminus, the 642-residue chain is Threonine--tRNA ligase (642 aa).

Residues 1–61 enclose the TGS domain; the sequence is MPVITLPDGS…ETDAELSIIT (61 aa). A catalytic region spans residues 243-534; that stretch reads DHRKIGKQLD…LIEEYAGRFP (292 aa). Cysteine 334, histidine 385, and histidine 511 together coordinate Zn(2+).

It belongs to the class-II aminoacyl-tRNA synthetase family. As to quaternary structure, homodimer. It depends on Zn(2+) as a cofactor.

The protein localises to the cytoplasm. It carries out the reaction tRNA(Thr) + L-threonine + ATP = L-threonyl-tRNA(Thr) + AMP + diphosphate + H(+). Catalyzes the attachment of threonine to tRNA(Thr) in a two-step reaction: L-threonine is first activated by ATP to form Thr-AMP and then transferred to the acceptor end of tRNA(Thr). Also edits incorrectly charged L-seryl-tRNA(Thr). In Shewanella oneidensis (strain ATCC 700550 / JCM 31522 / CIP 106686 / LMG 19005 / NCIMB 14063 / MR-1), this protein is Threonine--tRNA ligase.